The sequence spans 386 residues: Succinate--CoA ligase [ADP-forming] subunit beta (386 aa).

The 236-residue stretch at 9-244 (KQILKRFGIS…YDEEIPEEIE (236 aa)) folds into the ATP-grasp domain. ATP-binding positions include lysine 46, 53 to 55 (GRG), glutamate 99, cysteine 102, and glutamate 107. Residues asparagine 199 and aspartate 213 each contribute to the Mg(2+) site. Substrate contacts are provided by residues asparagine 264 and 320 to 322 (GIM).

Belongs to the succinate/malate CoA ligase beta subunit family. Heterotetramer of two alpha and two beta subunits. It depends on Mg(2+) as a cofactor.

The catalysed reaction is succinate + ATP + CoA = succinyl-CoA + ADP + phosphate. It carries out the reaction GTP + succinate + CoA = succinyl-CoA + GDP + phosphate. It functions in the pathway carbohydrate metabolism; tricarboxylic acid cycle; succinate from succinyl-CoA (ligase route): step 1/1. In terms of biological role, succinyl-CoA synthetase functions in the citric acid cycle (TCA), coupling the hydrolysis of succinyl-CoA to the synthesis of either ATP or GTP and thus represents the only step of substrate-level phosphorylation in the TCA. The beta subunit provides nucleotide specificity of the enzyme and binds the substrate succinate, while the binding sites for coenzyme A and phosphate are found in the alpha subunit. The polypeptide is Succinate--CoA ligase [ADP-forming] subunit beta (Ehrlichia ruminantium (strain Welgevonden)).